The primary structure comprises 306 residues: MIFQRTVQKMVKSTGVGLHSGNKVTLCIMPAPVNTGIVLKRTDLSPAVSIPAKADMVRETTMCTALVNDAGIRISTIEHLFAALAGLGIDNAIIEVDAPEIPIMDGSASPFVFLLQSAGIKEQAAAKKYLKIIKPVRVEDGDKWAELKPFKGFRVDFRIDFDHPEIARSQQHMVMDFSTSAFVKDISRARTFGFMRDIEYLRANNLALGGSMENAVVLDEYRVLNPDGLRYEDEFVKHKILDAFGDLYVAGHAIVGEFSAYKTGHALNNQLVRALLAQQDAWELVSFDKEADVPVSFMVPGALAHV.

Residues histidine 79, histidine 238, and aspartate 242 each contribute to the Zn(2+) site. Catalysis depends on histidine 265, which acts as the Proton donor.

The protein belongs to the LpxC family. Zn(2+) is required as a cofactor.

The catalysed reaction is a UDP-3-O-[(3R)-3-hydroxyacyl]-N-acetyl-alpha-D-glucosamine + H2O = a UDP-3-O-[(3R)-3-hydroxyacyl]-alpha-D-glucosamine + acetate. It functions in the pathway glycolipid biosynthesis; lipid IV(A) biosynthesis; lipid IV(A) from (3R)-3-hydroxytetradecanoyl-[acyl-carrier-protein] and UDP-N-acetyl-alpha-D-glucosamine: step 2/6. Catalyzes the hydrolysis of UDP-3-O-myristoyl-N-acetylglucosamine to form UDP-3-O-myristoylglucosamine and acetate, the committed step in lipid A biosynthesis. In Shewanella frigidimarina (strain NCIMB 400), this protein is UDP-3-O-acyl-N-acetylglucosamine deacetylase.